Here is a 173-residue protein sequence, read N- to C-terminus: Translation initiation factor IF-3 (173 aa).

This sequence belongs to the IF-3 family. In terms of assembly, monomer.

The protein localises to the cytoplasm. IF-3 binds to the 30S ribosomal subunit and shifts the equilibrium between 70S ribosomes and their 50S and 30S subunits in favor of the free subunits, thus enhancing the availability of 30S subunits on which protein synthesis initiation begins. The chain is Translation initiation factor IF-3 from Lactiplantibacillus plantarum (strain ATCC BAA-793 / NCIMB 8826 / WCFS1) (Lactobacillus plantarum).